Reading from the N-terminus, the 189-residue chain is Probable nicotinate-nucleotide adenylyltransferase (189 aa).

Belongs to the NadD family.

It catalyses the reaction nicotinate beta-D-ribonucleotide + ATP + H(+) = deamido-NAD(+) + diphosphate. Its pathway is cofactor biosynthesis; NAD(+) biosynthesis; deamido-NAD(+) from nicotinate D-ribonucleotide: step 1/1. Its function is as follows. Catalyzes the reversible adenylation of nicotinate mononucleotide (NaMN) to nicotinic acid adenine dinucleotide (NaAD). This Bacillus cereus (strain B4264) protein is Probable nicotinate-nucleotide adenylyltransferase.